Consider the following 90-residue polypeptide: Probable Fe(2+)-trafficking protein (90 aa).

Belongs to the Fe(2+)-trafficking protein family.

Could be a mediator in iron transactions between iron acquisition and iron-requiring processes, such as synthesis and/or repair of Fe-S clusters in biosynthetic enzymes. The chain is Probable Fe(2+)-trafficking protein from Acinetobacter baylyi (strain ATCC 33305 / BD413 / ADP1).